The sequence spans 252 residues: Hydroxyacylglutathione hydrolase (252 aa).

Zn(2+) contacts are provided by histidine 54, histidine 56, aspartate 58, histidine 59, histidine 111, aspartate 128, and histidine 166.

This sequence belongs to the metallo-beta-lactamase superfamily. Glyoxalase II family. Monomer. It depends on Zn(2+) as a cofactor.

The enzyme catalyses an S-(2-hydroxyacyl)glutathione + H2O = a 2-hydroxy carboxylate + glutathione + H(+). The protein operates within secondary metabolite metabolism; methylglyoxal degradation; (R)-lactate from methylglyoxal: step 2/2. Thiolesterase that catalyzes the hydrolysis of S-D-lactoyl-glutathione to form glutathione and D-lactic acid. The sequence is that of Hydroxyacylglutathione hydrolase from Aliivibrio fischeri (strain MJ11) (Vibrio fischeri).